A 172-amino-acid polypeptide reads, in one-letter code: S-ribosylhomocysteine lyase (172 aa).

Residues H54, H58, and C128 each coordinate Fe cation.

Belongs to the LuxS family. As to quaternary structure, homodimer. Requires Fe cation as cofactor.

It carries out the reaction S-(5-deoxy-D-ribos-5-yl)-L-homocysteine = (S)-4,5-dihydroxypentane-2,3-dione + L-homocysteine. Its function is as follows. Involved in the synthesis of autoinducer 2 (AI-2) which is secreted by bacteria and is used to communicate both the cell density and the metabolic potential of the environment. The regulation of gene expression in response to changes in cell density is called quorum sensing. Catalyzes the transformation of S-ribosylhomocysteine (RHC) to homocysteine (HC) and 4,5-dihydroxy-2,3-pentadione (DPD). This is S-ribosylhomocysteine lyase from Aliivibrio salmonicida (strain LFI1238) (Vibrio salmonicida (strain LFI1238)).